Reading from the N-terminus, the 249-residue chain is MIRILVSNDDGVNAPGIKALTEALAEIATVLTVGPDRNCSGASNSLTLTNPLRINRLDNGYISVHGTPTDCVHLAIRELYDGEPDMVVSGINAGANMGDDTLYSGTVAAAMEGRFLGFPAVAISLNGRKFEHYQSAAVYARRIVQGLLAQPLAKDQILNVNVPDLPLDQIKGIKVTRLGARHKAEGIVRTQDPAGREIFWLGPPGQEQDATDGTDFHAVANGYVSITPLTVDLTAYGQLTALQNWVDKI.

A divalent metal cation is bound by residues Asp-9, Asp-10, Ser-40, and Asn-92.

Belongs to the SurE nucleotidase family. A divalent metal cation is required as a cofactor.

It is found in the cytoplasm. The catalysed reaction is a ribonucleoside 5'-phosphate + H2O = a ribonucleoside + phosphate. Nucleotidase that shows phosphatase activity on nucleoside 5'-monophosphates. The protein is 5'-nucleotidase SurE of Shewanella baltica (strain OS195).